A 388-amino-acid chain; its full sequence is Protein RecA (388 aa).

Residue 79 to 86 participates in ATP binding; it reads GPESSGKT. The tract at residues 347 to 372 is disordered; that stretch reads IDGEEVSEQDTENKKDEPKKEEAVNE. Residues 357 to 369 show a composition bias toward basic and acidic residues; it reads TENKKDEPKKEEA.

It belongs to the RecA family.

The protein localises to the cytoplasm. In terms of biological role, can catalyze the hydrolysis of ATP in the presence of single-stranded DNA, the ATP-dependent uptake of single-stranded DNA by duplex DNA, and the ATP-dependent hybridization of homologous single-stranded DNAs. It interacts with LexA causing its activation and leading to its autocatalytic cleavage. The sequence is that of Protein RecA from Streptococcus pneumoniae (strain CGSP14).